Consider the following 353-residue polypeptide: Terpene synthase 1 (353 aa).

Residues D81 to A86 carry the DDxx(x)D/E motif motif. Residues N222–E230 carry the NDxxSxxxD/E motif motif.

The protein belongs to the terpene synthase family.

The catalysed reaction is (2E,6E)-farnesyl diphosphate = (2S,3R,6S,9S)-(-)-protoillud-7-ene + diphosphate. Functionally, terpene synthase that converts its substrate farnesyl diphosphate (FPP) into the sesquiterpene protoillud-7-ene. The protein is Terpene synthase 1 of Tieghemostelium lacteum (Slime mold).